Reading from the N-terminus, the 712-residue chain is MEENPTLESEAWGSSRGWLAPREARGAPCSSPGPSLSSVLNELPSAATLRYRDPGVLPWGALEEEEEDGGRSRKAFTEVTQTELQDPHPSRELPWPMQARRAHRQRNASRDQVVYGSGTKTDRWARLLRRSKEKTKEGLRSLQPWAWTLKRIGGQFGAGTESYFSLLRFLLLLNVLASVLMACMTLLPTWLGGAPPGPPGPDISSPCGSYNPHSQGLVTFATQLFNLLSGEGYLEWSPLFYGFYPPRPRLAVTYLCWAFAVGLICLLLILHRSVSGLKQTLLAESEALTSYSHRVFSAWDFGLCGDVHVRLRQRIILYELKVELEETVVRRQAAVRTLGQQARVWLVRVLLNLLVVALLGAAFYGVYWATGCTVELQEMPLVQELPLLKLGVNYLPSIFIAGVNFVLPPVFKLIAPLEGYTRSRQIVFILLRTVFLRLASLVVLLFSLWNQITCGGDSEAEDCKTCGYNYKQLPCWETVLGQEMYKLLLFDLLTVLAVALLIQFPRKLLCGLCPGALGRLAGTQEFQVPDEVLGLIYAQTVVWVGSFFCPLLPLLNTVKFLLLFYLKKLTLFSTCSPAARTFRASAANFFFPLVLLLGLAISSVPLLYSIFLIPPSKLCGPFRGQSSIWAQIPESISSLPETTQNFLFFLGTQAFAVPLLLISSILMAYTVALANSYGRLISELKRQRQTEAQNKVFLARRAVALTSTKPAL.

Positions 1–39 are disordered; sequence MEENPTLESEAWGSSRGWLAPREARGAPCSSPGPSLSSV. Over 1–168 the chain is Extracellular; the sequence is MEENPTLESE…GTESYFSLLR (168 aa). An N-linked (GlcNAc...) asparagine glycan is attached at Asn-107. The helical transmembrane segment at 169-189 threads the bilayer; the sequence is FLLLLNVLASVLMACMTLLPT. The Cytoplasmic portion of the chain corresponds to 190–249; sequence WLGGAPPGPPGPDISSPCGSYNPHSQGLVTFATQLFNLLSGEGYLEWSPLFYGFYPPRPR. A helical transmembrane segment spans residues 250–270; that stretch reads LAVTYLCWAFAVGLICLLLIL. The Extracellular segment spans residues 271–348; that stretch reads HRSVSGLKQT…GQQARVWLVR (78 aa). A helical transmembrane segment spans residues 349-369; that stretch reads VLLNLLVVALLGAAFYGVYWA. The Cytoplasmic segment spans residues 370–394; the sequence is TGCTVELQEMPLVQELPLLKLGVNY. A helical membrane pass occupies residues 395-415; that stretch reads LPSIFIAGVNFVLPPVFKLIA. Over 416 to 425 the chain is Extracellular; the sequence is PLEGYTRSRQ. A helical transmembrane segment spans residues 426-446; it reads IVFILLRTVFLRLASLVVLLF. Residues 447 to 483 are Cytoplasmic-facing; it reads SLWNQITCGGDSEAEDCKTCGYNYKQLPCWETVLGQE. A helical membrane pass occupies residues 484–504; sequence MYKLLLFDLLTVLAVALLIQF. At 505–542 the chain is on the extracellular side; sequence PRKLLCGLCPGALGRLAGTQEFQVPDEVLGLIYAQTVV. Residues 543–565 form a helical membrane-spanning segment; it reads WVGSFFCPLLPLLNTVKFLLLFY. Over 566–592 the chain is Cytoplasmic; sequence LKKLTLFSTCSPAARTFRASAANFFFP. A helical transmembrane segment spans residues 593-613; the sequence is LVLLLGLAISSVPLLYSIFLI. Topologically, residues 614-654 are extracellular; it reads PPSKLCGPFRGQSSIWAQIPESISSLPETTQNFLFFLGTQA. The helical transmembrane segment at 655–677 threads the bilayer; that stretch reads FAVPLLLISSILMAYTVALANSY. Over 678 to 712 the chain is Cytoplasmic; the sequence is GRLISELKRQRQTEAQNKVFLARRAVALTSTKPAL.

It belongs to the TMC family.

The protein resides in the membrane. The catalysed reaction is chloride(in) = chloride(out). Its function is as follows. Voltage-gated chloride channel involved in high-concentration salt taste sensation. Depolarization induced by high NaCl concentration may trigger the activation of TMC4-mediated chloride influx into taste bud cells, helping the return to resting potential. Also allows permeation of organic anions including gluconate, but their current amplitudes at positive potentials are less than that of chloride. Involved in pH and temperature-dependent modulation of salty taste. The polypeptide is Voltage-gated chloride channel TMC4 (Homo sapiens (Human)).